A 136-amino-acid chain; its full sequence is Small ribosomal subunit protein uS19 (136 aa).

It belongs to the universal ribosomal protein uS19 family.

Functionally, protein S19 forms a complex with S13 that binds strongly to the 16S ribosomal RNA. The protein is Small ribosomal subunit protein uS19 of Methanosphaera stadtmanae (strain ATCC 43021 / DSM 3091 / JCM 11832 / MCB-3).